We begin with the raw amino-acid sequence, 415 residues long: Putative serine/threonine-protein phosphatase 4 regulatory subunit 1-like (415 aa).

HEAT repeat units lie at residues 86-124, 163-202, 203-241, and 242-280; these read VMEIVVRLSEDAEPTVRTELMEQIPPIAIFLQENRSNFP, LLPRFCELCGDRKLFQVRKVCAANFGDICHAVGQEATEKF, LIPKFFELCSDAVWGMRKACAECFTAVSHSSSPGVRRTQ, and LFPLFIRLVSDPCRWVHQAAFQSLGPFTSTFANPSRAGL. Positions 301-318 are enriched in low complexity; sequence FASGSPAPSSGGNTSPAS. Residues 301–362 are disordered; it reads FASGSPAPSS…GPAESPVESC (62 aa).

May be a regulatory subunit of serine/threonine-protein phosphatase 4. The polypeptide is Putative serine/threonine-protein phosphatase 4 regulatory subunit 1-like (PPP4R1L) (Homo sapiens (Human)).